The following is a 201-amino-acid chain: Recombination protein RecR (201 aa).

The C4-type zinc-finger motif lies at 60–75 (CSRCGNVDTVDPCTVC). A Toprim domain is found at 83-178 (SIIIVVEDVS…KITRLAHGVP (96 aa)).

Belongs to the RecR family.

May play a role in DNA repair. It seems to be involved in an RecBC-independent recombinational process of DNA repair. It may act with RecF and RecO. This is Recombination protein RecR from Rhizobium leguminosarum bv. trifolii (strain WSM2304).